The following is a 237-amino-acid chain: Probable transcriptional regulatory protein PSHAa1370 (237 aa).

This sequence belongs to the TACO1 family.

It localises to the cytoplasm. In Pseudoalteromonas translucida (strain TAC 125), this protein is Probable transcriptional regulatory protein PSHAa1370.